The primary structure comprises 499 residues: Aspartyl/glutamyl-tRNA(Asn/Gln) amidotransferase subunit B (499 aa).

The protein belongs to the GatB/GatE family. GatB subfamily. Heterotrimer of A, B and C subunits.

The catalysed reaction is L-glutamyl-tRNA(Gln) + L-glutamine + ATP + H2O = L-glutaminyl-tRNA(Gln) + L-glutamate + ADP + phosphate + H(+). It carries out the reaction L-aspartyl-tRNA(Asn) + L-glutamine + ATP + H2O = L-asparaginyl-tRNA(Asn) + L-glutamate + ADP + phosphate + 2 H(+). Allows the formation of correctly charged Asn-tRNA(Asn) or Gln-tRNA(Gln) through the transamidation of misacylated Asp-tRNA(Asn) or Glu-tRNA(Gln) in organisms which lack either or both of asparaginyl-tRNA or glutaminyl-tRNA synthetases. The reaction takes place in the presence of glutamine and ATP through an activated phospho-Asp-tRNA(Asn) or phospho-Glu-tRNA(Gln). The chain is Aspartyl/glutamyl-tRNA(Asn/Gln) amidotransferase subunit B from Bartonella tribocorum (strain CIP 105476 / IBS 506).